The sequence spans 421 residues: Acyl-coenzyme A thioesterase 6 (421 aa).

Residues Ser-232, Asp-326, and His-360 each act as charge relay system in the active site. The Peroxisome targeting signal motif lies at 419-421 (SKI).

The protein belongs to the C/M/P thioester hydrolase family.

Its subcellular location is the peroxisome. The protein resides in the cytoplasm. It carries out the reaction pristanoyl-CoA + H2O = 2,6,10,14-tetramethylpentadecanoate + CoA + H(+). The catalysed reaction is phytanoyl-CoA + H2O = 3,7,11,15-tetramethylhexadecanoate + CoA + H(+). The protein operates within lipid metabolism; fatty acid metabolism. Functionally, catalyzes the hydrolysis of acyl-CoAs into free fatty acids and coenzyme A (CoASH), regulating their respective intracellular levels. Catalyzes the hydrolysis of phytanoyl-CoA and pristanoyl-CoA, two methyl-branched fatty acids derived from phytol, that enter the body via the diet. The protein is Acyl-coenzyme A thioesterase 6 of Homo sapiens (Human).